The chain runs to 691 residues: MARSPVEPPASQPAKRAAWLRAELERANYAYYVLDQPDLPDAEYDRLFVELQRIEAEHPDLVTPDSPTQRVGGEAASGFTPVVHDKPMLSLNNGFADEDVIAFDKRVADGLDKATDLAGTVTEPVEYACELKFDGLAISLRYENGRFVQASTRGDGTTGEDVTENIRTIRAIPLTLKGKRLPRMLDVRGEVLMFKRDFARLNERQRAAGQREFANPRNAAAGSLRQLDSKITASRPLSFFAYGIGVLDGADMPDTHSGLLDWYETLGLPVNRERAVVRGAAGLLAFFHSVGERRESLPYDIDGVVYKVNRRDEQDRLGFVSRAPRFALAHKFPAQEALTKLIAIDVQVGRTGAITPVARLEPVFVGGATVTNATLHNEDEVRRKDIRIGDTVIVRRAGDVIPEVVSAVLDRRPADAQEFVMPTECPECGSRIERLPDEAIARCTGGLFCPAQRKQALWHFAQRRALDIDGLGEKIIDQLVEQNLVRTPADLFNLGFSTLVALDRFAEKSARNLIDSLEKAKHTTLARFIYALGIRHVGESTAKDLAKHFGSLDPIMDAPIDALLEVNDVGPIVAESIHQFFAEEHNRTVIEQLRARGKVTWPEGPPAPRAPQGVLAGKTVVLTGTLPTLTREAAKEMLEAAGAKVAGSVSKKTDYVVAGADAGSKLAKAEELGIPVLDEAGMHTLLEGHAR.

Residues 41-45 (DAEYD), 90-91 (SL), and Glu130 each bind NAD(+). The N6-AMP-lysine intermediate role is filled by Lys132. NAD(+)-binding residues include Arg153, Glu190, Lys307, and Lys331. Zn(2+) is bound by residues Cys425, Cys428, Cys443, and Cys449. The region spanning 610–691 (APQGVLAGKT…MHTLLEGHAR (82 aa)) is the BRCT domain.

It belongs to the NAD-dependent DNA ligase family. LigA subfamily. It depends on Mg(2+) as a cofactor. The cofactor is Mn(2+).

It catalyses the reaction NAD(+) + (deoxyribonucleotide)n-3'-hydroxyl + 5'-phospho-(deoxyribonucleotide)m = (deoxyribonucleotide)n+m + AMP + beta-nicotinamide D-nucleotide.. DNA ligase that catalyzes the formation of phosphodiester linkages between 5'-phosphoryl and 3'-hydroxyl groups in double-stranded DNA using NAD as a coenzyme and as the energy source for the reaction. It is essential for DNA replication and repair of damaged DNA. This Burkholderia pseudomallei (strain 668) protein is DNA ligase.